The chain runs to 234 residues: Adenosine 5'-phosphosulfate reductase (234 aa).

Cys-120, Cys-121, Cys-203, and Cys-206 together coordinate [4Fe-4S] cluster. The active-site Nucleophile; cysteine thiosulfonate intermediate is the Cys-229.

Belongs to the PAPS reductase family. CysH subfamily. [4Fe-4S] cluster is required as a cofactor.

It localises to the cytoplasm. The catalysed reaction is [thioredoxin]-disulfide + sulfite + AMP + 2 H(+) = adenosine 5'-phosphosulfate + [thioredoxin]-dithiol. It participates in sulfur metabolism; hydrogen sulfide biosynthesis; sulfite from sulfate. Catalyzes the formation of sulfite from adenosine 5'-phosphosulfate (APS) using thioredoxin as an electron donor. The sequence is that of Adenosine 5'-phosphosulfate reductase from Bacillus cereus (strain ZK / E33L).